A 636-amino-acid polypeptide reads, in one-letter code: PTS system beta-glucoside-specific EIIBCA component (636 aa).

One can recognise a PTS EIIB type-1 domain in the interval 1–86; that stretch reads MKYEQLAKDI…VEIGGFQNQA (86 aa). Cys-26 serves as the catalytic Phosphocysteine intermediate; for EIIB activity. 10 helical membrane-spanning segments follow: residues 104-124, 146-166, 172-192, 215-235, 258-278, 299-319, 337-357, 369-389, 407-427, and 444-464; these read IDII…TGMI, LLHA…GYTA, ATPF…LVVL, FLGI…IILA, LVPF…IGPI, IIAG…GLHW, VLAM…AVWL, VPAF…GVTL, AIIG…IFGI, and IVIA…LFGL. Positions 105–476 constitute a PTS EIIC type-1 domain; it reads DIIASIFTPV…GNASDEQTET (372 aa). The disordered stretch occupies residues 472–492; it reads EQTETKAHTSTGTGEKEEISS. Residues 506 to 610 form the PTS EIIA type-1 domain; it reads DEAFSSGALG…AVTTPVIVTN (105 aa). The Tele-phosphohistidine intermediate; for EIIA activity role is filled by His-558.

It is found in the cell membrane. In terms of biological role, the phosphoenolpyruvate-dependent sugar phosphotransferase system (sugar PTS), a major carbohydrate active -transport system, catalyzes the phosphorylation of incoming sugar substrates concomitantly with their translocation across the cell membrane. This system is involved in beta-glucoside transport. This chain is PTS system beta-glucoside-specific EIIBCA component (bglP), found in Halalkalibacterium halodurans (strain ATCC BAA-125 / DSM 18197 / FERM 7344 / JCM 9153 / C-125) (Bacillus halodurans).